The chain runs to 170 residues: Large ribosomal subunit protein uL18c (170 aa).

The transit peptide at 1–63 (MLASPALAGA…QADRIARHVR (63 aa)) directs the protein to the chloroplast.

The protein belongs to the universal ribosomal protein uL18 family. As to quaternary structure, part of the 50S ribosomal subunit; contacts the 5S rRNA.

It localises to the plastid. It is found in the chloroplast. Functionally, binds 5S rRNA, forms part of the central protuberance of the 50S subunit. The protein is Large ribosomal subunit protein uL18c (RPL18) of Oryza sativa subsp. japonica (Rice).